The chain runs to 451 residues: Probable asparagine--tRNA ligase, cytoplasmic (451 aa).

Belongs to the class-II aminoacyl-tRNA synthetase family.

It is found in the cytoplasm. The enzyme catalyses tRNA(Asn) + L-asparagine + ATP = L-asparaginyl-tRNA(Asn) + AMP + diphosphate + H(+). The sequence is that of Probable asparagine--tRNA ligase, cytoplasmic from Encephalitozoon cuniculi (strain GB-M1) (Microsporidian parasite).